Consider the following 813-residue polypeptide: LPS-assembly protein LptD (813 aa).

The signal sequence occupies residues 1-22; that stretch reads MRRALRLLPLPLSIAICLPAMA.

This sequence belongs to the LptD family. In terms of assembly, component of the lipopolysaccharide transport and assembly complex. Interacts with LptE and LptA.

The protein localises to the cell outer membrane. In terms of biological role, together with LptE, is involved in the assembly of lipopolysaccharide (LPS) at the surface of the outer membrane. This chain is LPS-assembly protein LptD, found in Xanthomonas oryzae pv. oryzae (strain KACC10331 / KXO85).